The primary structure comprises 107 residues: EMBRYO SURROUNDING FACTOR 1-like protein 5 (107 aa).

Positions 1–22 (MSLLRFAILCIIFVSLFGVHEC) are cleaved as a signal peptide. Disulfide bonds link cysteine 35-cysteine 49, cysteine 40-cysteine 69, cysteine 47-cysteine 65, and cysteine 50-cysteine 58. A helical membrane pass occupies residues 87-107 (GLGPPIYLFFLGQFIYFVLGL).

Belongs to the MEG family. As to expression, expressed in flowers.

The protein localises to the membrane. The protein is EMBRYO SURROUNDING FACTOR 1-like protein 5 (ESFL5) of Arabidopsis thaliana (Mouse-ear cress).